A 636-amino-acid polypeptide reads, in one-letter code: Eisosome protein sle1 (636 aa).

Residues 1–297 (MSHASKNYNA…HVIIYENKEG (297 aa)) form a required for targeting the protein to eisosomes region. Disordered regions lie at residues 111–205 (ANYM…SPAN), 222–284 (YSPS…VPPV), 313–387 (DPSG…TQHF), 400–451 (QYYQ…QPSL), 467–550 (DITP…VNNA), and 572–604 (PSNHAYSEGRSYTFTGGQPPSVPTMPYGSRFAN). 5 stretches are compositionally biased toward polar residues: residues 131–159 (PSQQVRPSTSRSPSYASYNSEEVNFQSYQ), 166–178 (RTSQMYMPDNNYS), 188–204 (RRSSSYMVPANSRGSPA), 237–255 (SYNNVQRSSTVRNNTTQKS), and 315–354 (SGSNQASLRSTSTIHYTPSSKRISVIPPNTSNIGSRVVSR). The span at 355–383 (SGQNNNQPAQPGQYNQQSQPVQSYQSGQS) shows a compositional bias: low complexity. Polar residues-rich tracts occupy residues 400-412 (QYYQPSSPVQPVQ) and 422-439 (PVQSTQYYQPSSPVQPVQ). Residues 471–484 (TASSTTANNAYASA) show a composition bias toward low complexity. Basic and acidic residues predominate over residues 503–512 (SFERERDSGR). A compositionally biased stretch (polar residues) spans 572–589 (PSNHAYSEGRSYTFTGGQ).

In terms of assembly, component of eisosomes, large cytoplasmic protein assemblies that localize to specialized domains termed MCCs on the plasma membrane.

Its subcellular location is the cytoplasm. It localises to the cell cortex. The protein localises to the cell tip. In terms of biological role, important for the biogenesis of filamentous eisosomes, large cytoplasmic protein assemblies that localize to specialized domains on the plasma membrane to cluster specific proteins at sites of membrane invaginations. This chain is Eisosome protein sle1 (sle1), found in Schizosaccharomyces pombe (strain 972 / ATCC 24843) (Fission yeast).